A 547-amino-acid polypeptide reads, in one-letter code: MRVNLLIAMIIFALIWPATALRAAVSKTTWADAPAREFVFVENNSDDNFFVTPGGALDPRLTGANRWTGLKYNGSGTIYQQSLGYIDNGYNTGLYTNWKFDMWLENSPVSSPLTGLRCINWYAGCNMTTSLILPQTTDASGFYGATVTSGGAKWMHGMLSDAFYQYLQQMPVGSSFTMTINACQTSVNYDASSGARCKDQASGNWYVRNVTHTKAANLRLINTHSLAEVFINSDGVPTLGEGNADCRTQTIGSRSGLSCKMVNYTLQTNGLSNTSIHIFPAIANSSLASAVGAYDMQFSLNGSSWKPVSNTAYYYTFNEMKSADSIYVFFSSNFFKQMVNLGISDINTKDLFNFRFQNTTSPESGWYEFSTSNTLIIKPRDFSISIISDEYTQTPSREGYVASGESALDFGYIVTTSGKTAADEVLIKVTGPAQVIGGRSYCVFSSDDGKAKVPFPATLSFITRNGATKTYDAGCDDSWRDMTDALWLTTPWTDISGEVGQMDKTTVKFSIPMDNAISLRTVDDNGWFGEVSASGEIHVQATWRNIN.

The first 20 residues, 1–20 (MRVNLLIAMIIFALIWPATA), serve as a signal peptide directing secretion.

It belongs to the EcpD/MatE family. As to quaternary structure, forms polymers. Interacts with EcpA.

The protein resides in the fimbrium. Part of the ecpRABCDE operon, which encodes the E.coli common pilus (ECP). ECP is found in both commensal and pathogenic strains and plays a dual role in early-stage biofilm development and host cell recognition. Tip pilus adhesin, which is required for assembly of EcpA into fibers. The protein is Fimbria adhesin EcpD (ecpD) of Escherichia coli O127:H6 (strain E2348/69 / EPEC).